Reading from the N-terminus, the 245-residue chain is Carboxy-S-adenosyl-L-methionine synthase (245 aa).

Residues Tyr42, 67–69, 92–93, 120–121, Asn135, and Arg202 each bind S-adenosyl-L-methionine; these read GCS, DN, and DI.

The protein belongs to the class I-like SAM-binding methyltransferase superfamily. Cx-SAM synthase family. In terms of assembly, homodimer.

The catalysed reaction is prephenate + S-adenosyl-L-methionine = carboxy-S-adenosyl-L-methionine + 3-phenylpyruvate + H2O. In terms of biological role, catalyzes the conversion of S-adenosyl-L-methionine (SAM) to carboxy-S-adenosyl-L-methionine (Cx-SAM). The polypeptide is Carboxy-S-adenosyl-L-methionine synthase (Vibrio vulnificus (strain YJ016)).